The sequence spans 90 residues: Probable Fe(2+)-trafficking protein (90 aa).

Belongs to the Fe(2+)-trafficking protein family.

Its function is as follows. Could be a mediator in iron transactions between iron acquisition and iron-requiring processes, such as synthesis and/or repair of Fe-S clusters in biosynthetic enzymes. In Herminiimonas arsenicoxydans, this protein is Probable Fe(2+)-trafficking protein.